Consider the following 326-residue polypeptide: Elongation factor Ts (326 aa).

The interval 80-83 (TDFV) is involved in Mg(2+) ion dislocation from EF-Tu.

This sequence belongs to the EF-Ts family.

The protein resides in the cytoplasm. Its function is as follows. Associates with the EF-Tu.GDP complex and induces the exchange of GDP to GTP. It remains bound to the aminoacyl-tRNA.EF-Tu.GTP complex up to the GTP hydrolysis stage on the ribosome. This is Elongation factor Ts from Rhodopirellula baltica (strain DSM 10527 / NCIMB 13988 / SH1).